Reading from the N-terminus, the 333-residue chain is Calcium uniporter protein, mitochondrial (333 aa).

The transit peptide at 1 to 22 (MRNGRCLVTPFVTAQRLANLRN) directs the protein to the mitochondrion. Residues 23 to 214 (TLWNRQQIAF…QECEAHTDRV (192 aa)) are Mitochondrial matrix-facing. A coiled-coil region spans residues 180 to 193 (KKLLLQLENAETLL). Positions 195–213 (PLHDAKRKIEQECEAHTDR) are outer juxtamembrane helix (OJMH). The chain crosses the membrane as a helical span at residues 215–234 (MWAGFAAMGVQTGLFARLTW). Over 235-243 (WEYSWDIME) the chain is Mitochondrial intermembrane. Residues 239–247 (WDIMEPVTY) carry the Selectivity filter motif. Residue Glu243 participates in Ca(2+) binding. The chain crosses the membrane as a helical span at residues 244-260 (PVTYFATYSTVCATFGY). At 261–333 (YLYTQQSFEY…SYLSNLEAEK (73 aa)) the chain is on the mitochondrial matrix side. The segment at 262–271 (LYTQQSFEYP) is inner juxtamembrane helix (IJMH). Positions 289-316 (QNFDIEKYNRLVTEVDELRNQLKRMRDP) form a coiled coil.

This sequence belongs to the MCU (TC 1.A.77) family.

Its subcellular location is the mitochondrion inner membrane. The catalysed reaction is Ca(2+)(in) = Ca(2+)(out). Inhibited by ruthenium red or its derivative Ru360; possibly by obstructing the pore. In terms of biological role, mitochondrial inner membrane calcium uniporter that mediates calcium uptake into mitochondria. Constitutes a pore-forming and calcium-conducting subunit. Mitochondrial calcium homeostasis plays key roles in cellular physiology and regulates cell bioenergetics, cytoplasmic calcium signals and activation of cell death pathways. Required for rapid mitochondrial calcium uptake and mitochondrial reactive oxygen species (mtROS) production after wounding. In addition, together with mitochondrial calcium regulator micu-1, required for mitochondrial calcium uptake following axon injury in PLM touch receptor neurons. This chain is Calcium uniporter protein, mitochondrial, found in Caenorhabditis elegans.